The sequence spans 248 residues: PF03932 family protein CutC (248 aa).

This sequence belongs to the CutC family. In terms of assembly, homodimer.

Its subcellular location is the cytoplasm. The protein is PF03932 family protein CutC of Escherichia coli (strain 55989 / EAEC).